Consider the following 177-residue polypeptide: Large ribosomal subunit protein uL6 (177 aa).

N6-acetyllysine is present on K44.

Belongs to the universal ribosomal protein uL6 family. Part of the 50S ribosomal subunit.

Its function is as follows. This protein binds to the 23S rRNA, and is important in its secondary structure. It is located near the subunit interface in the base of the L7/L12 stalk, and near the tRNA binding site of the peptidyltransferase center. This is Large ribosomal subunit protein uL6 from Shigella sonnei (strain Ss046).